We begin with the raw amino-acid sequence, 312 residues long: TATA box-binding protein-like 2 (312 aa).

Residues 65-115 (DELSTQDEPSQVEKESKNEDSGIYTDCPQKESTQADIDTSNSAQNTSQFNL) are disordered. Residues 75 to 84 (QVEKESKNED) are compositionally biased toward basic and acidic residues. The span at 94 to 115 (KESTQADIDTSNSAQNTSQFNL) shows a compositional bias: polar residues.

The protein belongs to the TBP family. As to expression, in adults, expressed in the gonads, with expression much higher in the ovary than the testis (at protein level). Shows a small amount of expression in other adult organs, including the brain and kidney. Embryonic expression is mostly ubiquitous except in early gastrula embryos where expression is asymmetric.

It localises to the nucleus. In terms of biological role, TATA box-binding transcription factor. Members of the TBP family are differentially required to regulate transcription and development during early embryogenesis. Commits mesoderm to the hematopoietic lineage during hemopoiesis, acting via mespa. Binds to the mespa promoter. The protein is TATA box-binding protein-like 2 of Danio rerio (Zebrafish).